The chain runs to 277 residues: S-formylglutathione hydrolase FrmB (277 aa).

Catalysis depends on charge relay system residues S145, D221, and H254.

The protein belongs to the esterase D family.

The catalysed reaction is S-formylglutathione + H2O = formate + glutathione + H(+). Functionally, serine hydrolase involved in the detoxification of formaldehyde. Hydrolyzes S-formylglutathione to glutathione and formate. In Escherichia coli O1:K1 / APEC, this protein is S-formylglutathione hydrolase FrmB (frmB).